A 320-amino-acid polypeptide reads, in one-letter code: Cytochrome c biogenesis protein CcsA (320 aa).

7 helical membrane passes run isoleucine 13–valine 33, glycine 46–glycine 66, leucine 73–leucine 93, methionine 147–isoleucine 167, isoleucine 226–asparagine 246, glutamate 259–histidine 274, and valine 289–isoleucine 309.

Belongs to the CcmF/CycK/Ccl1/NrfE/CcsA family. May interact with Ccs1.

It is found in the plastid. Its subcellular location is the chloroplast thylakoid membrane. Its function is as follows. Required during biogenesis of c-type cytochromes (cytochrome c6 and cytochrome f) at the step of heme attachment. This Gossypium barbadense (Sea Island cotton) protein is Cytochrome c biogenesis protein CcsA.